We begin with the raw amino-acid sequence, 87 residues long: Large ribosomal subunit protein bL31B (87 aa).

Belongs to the bacterial ribosomal protein bL31 family. Type B subfamily. As to quaternary structure, part of the 50S ribosomal subunit.

The chain is Large ribosomal subunit protein bL31B from Burkholderia pseudomallei (strain 1106a).